The primary structure comprises 396 residues: Phosphoglycerate kinase (396 aa).

Substrate contacts are provided by residues 21–23, R36, 59–62, R118, and R151; these read DLN and HFGR. Residues K201, E323, and 353 to 356 contribute to the ATP site; that span reads GGDT.

Belongs to the phosphoglycerate kinase family. In terms of assembly, monomer.

The protein localises to the cytoplasm. The enzyme catalyses (2R)-3-phosphoglycerate + ATP = (2R)-3-phospho-glyceroyl phosphate + ADP. It participates in carbohydrate degradation; glycolysis; pyruvate from D-glyceraldehyde 3-phosphate: step 2/5. This Brucella abortus biovar 1 (strain 9-941) protein is Phosphoglycerate kinase.